The following is a 267-amino-acid chain: Orotidine 5'-phosphate decarboxylase (267 aa).

Substrate-binding positions include Asp37, 59–61 (KTH), 91–100 (DRKFADIGNT), Tyr217, and Arg235. The Proton donor role is filled by Lys93.

This sequence belongs to the OMP decarboxylase family.

The enzyme catalyses orotidine 5'-phosphate + H(+) = UMP + CO2. Its pathway is pyrimidine metabolism; UMP biosynthesis via de novo pathway; UMP from orotate: step 2/2. The sequence is that of Orotidine 5'-phosphate decarboxylase (URA3) from Kluyveromyces marxianus (Yeast).